The primary structure comprises 146 residues: Inner membrane protein YdgK (146 aa).

At 1–12 (MTTTTPQRIGGW) the chain is on the cytoplasmic side. Residues 13 to 33 (LLGPLAWLLVALLSTTLALLL) traverse the membrane as a helical segment. Topologically, residues 34 to 59 (YTAALSSPQTFQTLGGQALTTQILWG) are periplasmic. The helical transmembrane segment at 60–80 (VSFITAIALWYYTLWLTIAFF) threads the bilayer. The Cytoplasmic portion of the chain corresponds to 81 to 89 (KRRRCVPKH). Residues 90-110 (YIIWLLISVLLAVKAFAFSPV) traverse the membrane as a helical segment. Residues 111 to 112 (ED) are Periplasmic-facing. A helical transmembrane segment spans residues 113–133 (GIAVRQLLFTLLATALIVPYF). At 134-146 (KRSSRVKATFVNP) the chain is on the cytoplasmic side.

This sequence to Synechocystis PCC 6803 sll0481.

It localises to the cell inner membrane. This Escherichia coli (strain K12) protein is Inner membrane protein YdgK (ydgK).